The primary structure comprises 672 residues: tRNA 5-methylaminomethyl-2-thiouridine biosynthesis bifunctional protein MnmC (672 aa).

The segment at 1–243 is tRNA (mnm(5)s(2)U34)-methyltransferase; the sequence is MTSITHAELG…KREMIAGCME (243 aa). The segment at 269-672 is FAD-dependent cmnm(5)s(2)U34 oxidoreductase; the sequence is IGGGIASAAL…LRKGKAITEL (404 aa).

The protein in the N-terminal section; belongs to the methyltransferase superfamily. tRNA (mnm(5)s(2)U34)-methyltransferase family. This sequence in the C-terminal section; belongs to the DAO family. It depends on FAD as a cofactor.

The protein localises to the cytoplasm. The enzyme catalyses 5-aminomethyl-2-thiouridine(34) in tRNA + S-adenosyl-L-methionine = 5-methylaminomethyl-2-thiouridine(34) in tRNA + S-adenosyl-L-homocysteine + H(+). Its function is as follows. Catalyzes the last two steps in the biosynthesis of 5-methylaminomethyl-2-thiouridine (mnm(5)s(2)U) at the wobble position (U34) in tRNA. Catalyzes the FAD-dependent demodification of cmnm(5)s(2)U34 to nm(5)s(2)U34, followed by the transfer of a methyl group from S-adenosyl-L-methionine to nm(5)s(2)U34, to form mnm(5)s(2)U34. The protein is tRNA 5-methylaminomethyl-2-thiouridine biosynthesis bifunctional protein MnmC of Vibrio vulnificus (strain CMCP6).